The chain runs to 145 residues: Extracellular globin-2 (145 aa).

Positions 3 to 145 (QCGVLEGLKV…HIEDGIKGHH (143 aa)) constitute a Globin domain. Cysteines 4 and 133 form a disulfide. Heme b is bound at residue His-96.

The protein belongs to the globin family. In terms of assembly, the extracellular hemoglobin of the earthworm consists of 12 subunits that have a hexagonal bilayer structure with a molecular weight near 3.8 million. Each one-twelfth subunit is composed primarily of disulfide linked trimers (chains A, B, and C) and monomers (chain D).

This is Extracellular globin-2 from Lumbricus terrestris (Common earthworm).